A 140-amino-acid polypeptide reads, in one-letter code: MIIGFGNDLCDIRRIEESLARFGERFIARCFTDIERRKSEGRPSRAASYAKRFAAKEACAKALGTGLTQGVFWRDMGVVNLPSGKPTLALTGGAAERLALLTPPGLTAIIHLTLTDEFPLAQAQVIIEAVASEASFRPMT.

Residues Asp-8 and Glu-57 each contribute to the Mg(2+) site.

This sequence belongs to the P-Pant transferase superfamily. AcpS family. Mg(2+) is required as a cofactor.

The protein localises to the cytoplasm. It catalyses the reaction apo-[ACP] + CoA = holo-[ACP] + adenosine 3',5'-bisphosphate + H(+). In terms of biological role, transfers the 4'-phosphopantetheine moiety from coenzyme A to a Ser of acyl-carrier-protein. This Beijerinckia indica subsp. indica (strain ATCC 9039 / DSM 1715 / NCIMB 8712) protein is Holo-[acyl-carrier-protein] synthase.